Consider the following 196-residue polypeptide: Holliday junction branch migration complex subunit RuvA (196 aa).

A domain I region spans residues 1 to 63 (MYEYFKGIIS…EDAELLYGFA (63 aa)). Residues 64–142 (TEEEKQLFLS…AADGLAESKA (79 aa)) are domain II. The interval 143 to 146 (PVQT) is flexible linker. Positions 147-196 (VDNQELEEAMEAMLALGYKATELKKIKKFFEGTTDTAENYIKSALKMLVK) are domain III.

Belongs to the RuvA family. As to quaternary structure, homotetramer. Forms an RuvA(8)-RuvB(12)-Holliday junction (HJ) complex. HJ DNA is sandwiched between 2 RuvA tetramers; dsDNA enters through RuvA and exits via RuvB. An RuvB hexamer assembles on each DNA strand where it exits the tetramer. Each RuvB hexamer is contacted by two RuvA subunits (via domain III) on 2 adjacent RuvB subunits; this complex drives branch migration. In the full resolvosome a probable DNA-RuvA(4)-RuvB(12)-RuvC(2) complex forms which resolves the HJ.

The protein localises to the cytoplasm. Its function is as follows. The RuvA-RuvB-RuvC complex processes Holliday junction (HJ) DNA during genetic recombination and DNA repair, while the RuvA-RuvB complex plays an important role in the rescue of blocked DNA replication forks via replication fork reversal (RFR). RuvA specifically binds to HJ cruciform DNA, conferring on it an open structure. The RuvB hexamer acts as an ATP-dependent pump, pulling dsDNA into and through the RuvAB complex. HJ branch migration allows RuvC to scan DNA until it finds its consensus sequence, where it cleaves and resolves the cruciform DNA. The protein is Holliday junction branch migration complex subunit RuvA of Streptococcus gordonii (strain Challis / ATCC 35105 / BCRC 15272 / CH1 / DL1 / V288).